The sequence spans 381 residues: Odorant receptor 46a, isoform A (381 aa).

The Cytoplasmic segment spans residues 1–37 (MSKGVEIFYKGQKAFLNILSLWPQIERRWRIIHQVNY). A helical membrane pass occupies residues 38–58 (VHVIVFWVLLFDLLLVLHVMA). The N-linked (GlcNAc...) asparagine glycan is linked to Asn-59. At 59–65 (NLSYMSE) the chain is on the extracellular side. A helical transmembrane segment spans residues 66-86 (VVKAIFILATSAGHTTKLLSI). The Cytoplasmic segment spans residues 87 to 127 (KANNVQMEELFRRLDNEEFRPRGANEELIFAAACERSRKLR). The chain crosses the membrane as a helical span at residues 128–148 (DFYGALSFAALSMILIPQFAL). Topologically, residues 149-170 (DWSHLPLKTYNPLGENTGSPAY) are extracellular. Residues 171 to 191 (WLLYCYQCLALSVSCITNIGF) traverse the membrane as a helical segment. Topologically, residues 192–255 (DSLCSSLFIF…KTVERLLCKP (64 aa)) are cytoplasmic. A helical membrane pass occupies residues 256-276 (ISVQIFCSVLVLTANFYAIAV). At 277-287 (LSDERLELFKY) the chain is on the extracellular side. Residues 288–308 (VTYQACMLIQIFILCYYAGEV) form a helical membrane-spanning segment. The Cytoplasmic portion of the chain corresponds to 309-355 (TQRSLDLPHELYKTSWVDWDYRSRRIALLFMQRLHSTLRIRTLNPSL). Residues 356-376 (GFDLMLFSSIVNCSYSYFALL) form a helical membrane-spanning segment. The Extracellular portion of the chain corresponds to 377–381 (KRVNS).

It belongs to the insect chemoreceptor superfamily. Heteromeric odorant receptor channel (TC 1.A.69) family. Or2a subfamily. Interacts with Orco. Complexes exist early in the endomembrane system in olfactory sensory neurons (OSNs), coupling these complexes to the conserved ciliary trafficking pathway. As to expression, isoform A is expressed in a subset of 17 olfactory receptor neurons in the maxillary palp.

The protein resides in the cell membrane. In terms of biological role, odorant receptor which mediates acceptance or avoidance behavior, depending on its substrates. The odorant receptor repertoire encodes a large collection of odor stimuli that vary widely in identity, intensity, and duration. May form a complex with Orco to form odorant-sensing units, providing sensitive and prolonged odorant signaling and calcium permeability. This is Odorant receptor 46a, isoform A (Or46a) from Drosophila melanogaster (Fruit fly).